Reading from the N-terminus, the 32-residue chain is Variegin (32 aa).

The disordered stretch occupies residues 1–32 (SDQGDVAEPKMHKTAPPFDFEAIPEEYLDDES). The interval 8–14 (EPKMHKT) is contains the active site. The O-linked (Hex) threonine glycan is linked to threonine 14. Residues 22 to 32 (AIPEEYLDDES) are compositionally biased toward acidic residues.

Interacts with human F2 (thrombin); the interaction results in thrombin inhibition.

It is found in the secreted. Its function is as follows. Thrombin inhibitor. Does not inhibit other serine proteases. In Amblyomma variegatum (Tropical bont tick), this protein is Variegin.